Consider the following 202-residue polypeptide: Imidazole glycerol phosphate synthase subunit HisH (202 aa).

The 200-residue stretch at 3-202 (RIVIIDYGLG…KILKNFVEMC (200 aa)) folds into the Glutamine amidotransferase type-1 domain. The active-site Nucleophile is cysteine 79. Catalysis depends on residues histidine 183 and glutamate 185.

As to quaternary structure, heterodimer of HisH and HisF.

It localises to the cytoplasm. It catalyses the reaction 5-[(5-phospho-1-deoxy-D-ribulos-1-ylimino)methylamino]-1-(5-phospho-beta-D-ribosyl)imidazole-4-carboxamide + L-glutamine = D-erythro-1-(imidazol-4-yl)glycerol 3-phosphate + 5-amino-1-(5-phospho-beta-D-ribosyl)imidazole-4-carboxamide + L-glutamate + H(+). The catalysed reaction is L-glutamine + H2O = L-glutamate + NH4(+). Its pathway is amino-acid biosynthesis; L-histidine biosynthesis; L-histidine from 5-phospho-alpha-D-ribose 1-diphosphate: step 5/9. IGPS catalyzes the conversion of PRFAR and glutamine to IGP, AICAR and glutamate. The HisH subunit catalyzes the hydrolysis of glutamine to glutamate and ammonia as part of the synthesis of IGP and AICAR. The resulting ammonia molecule is channeled to the active site of HisF. The chain is Imidazole glycerol phosphate synthase subunit HisH from Methanosarcina acetivorans (strain ATCC 35395 / DSM 2834 / JCM 12185 / C2A).